A 517-amino-acid chain; its full sequence is Cytochrome P450 monooxygenase ausI (517 aa).

A helical transmembrane segment spans residues 8–28 (LAPLGQPWIAGLVVVSAVLYL). Cysteine 457 contributes to the heme binding site.

This sequence belongs to the cytochrome P450 family. The cofactor is heme.

The protein localises to the membrane. Its pathway is secondary metabolite biosynthesis; terpenoid biosynthesis. Its function is as follows. Cytochrome P450 monooxygenase; part of the gene cluster that mediates the biosynthesis of calidodehydroaustin, a fungal meroterpenoid. The first step of the pathway is the synthesis of 3,5-dimethylorsellinic acid by the polyketide synthase ausA. 3,5-dimethylorsellinic acid is then prenylated by the polyprenyl transferase ausN. Further epoxidation by the FAD-dependent monooxygenase ausM and cyclization by the probable terpene cyclase ausL lead to the formation of protoaustinoid A. Protoaustinoid A is then oxidized to spiro-lactone preaustinoid A3 by the combined action of the FAD-binding monooxygenases ausB and ausC, and the dioxygenase ausE. Acid-catalyzed keto-rearrangement and ring contraction of the tetraketide portion of preaustinoid A3 by ausJ lead to the formation of preaustinoid A4. The aldo-keto reductase ausK, with the help of ausH, is involved in the next step by transforming preaustinoid A4 into isoaustinone which is in turn hydroxylated by the P450 monooxygenase ausI to form austinolide. The cytochrome P450 monooxygenase ausG modifies austinolide to austinol. Austinol is further acetylated to austin by the O-acetyltransferase ausP, which spontaneously changes to dehydroaustin. The cytochrome P450 monooxygenase ausR then converts dehydroaustin is into 7-dehydrodehydroaustin. The hydroxylation catalyzed by ausR permits the O-acetyltransferase ausQ to add an additional acetyl group to the molecule, leading to the formation of acetoxydehydroaustin. The short chain dehydrogenase ausT catalyzes the reduction of the double bond present between carbon atoms 1 and 2 to convert 7-dehydrodehydroaustin into 1,2-dihydro-7-hydroxydehydroaustin. AusQ catalyzes not only an acetylation reaction but also the addition of the PKS ausV diketide product to 1,2-dihydro-7-hydroxydehydroaustin, forming precalidodehydroaustin. Finally, the iron/alpha-ketoglutarate-dependent dioxygenase converts precalidodehydroaustin into calidodehydroaustin. The chain is Cytochrome P450 monooxygenase ausI from Aspergillus calidoustus.